A 1550-amino-acid polypeptide reads, in one-letter code: Protein TIME FOR COFFEE (1550 aa).

Disordered stretches follow at residues 1-191 (MDRN…PVSP), 207-304 (VPRK…PVAV), 325-505 (TSKQ…SERG), 708-736 (QGSVLGRSSNPVQDKNSQSTSKSSETAQR), 779-805 (RPPNSGITSSGPTATSTSMNGSASATP), 859-1023 (FNGS…KAGV), 1086-1130 (ASLE…QSIA), 1163-1196 (ALPQSSGSLPTSHHQQLLQQQQQQHMQRSQSQQP), 1213-1296 (AASA…SVAA), and 1321-1435 (NSKP…PKHG). Residues 43-80 (EAARLRDRGGSNKKDRDRERDRDRERERERDRERDRLN) are compositionally biased toward basic and acidic residues. Residues 100 to 118 (DGGDDSSEESVNDDEEYDD) are compositionally biased toward acidic residues. Residues 134–151 (SNNISAASFSSSLSNHHN) are compositionally biased toward low complexity. A compositionally biased stretch (basic residues) spans 157-171 (LHHHHHSHNNNHQRK). A compositionally biased stretch (polar residues) spans 241–250 (RQISSTSPAN). Low complexity predominate over residues 292–301 (KSSSSKLSSP). The span at 348–366 (RVSSPISNPQTLPQSSITL) shows a compositional bias: polar residues. A compositionally biased stretch (low complexity) spans 367-379 (AANSSSSNVSAIA). Residues 409-432 (SKSQVPFSNQLKSSGSGEGNSSVL) show a composition bias toward polar residues. Composition is skewed to basic and acidic residues over residues 447–461 (DSEKKENNLSKDETI) and 473–490 (SDGEGAKSSSPEKEKFEI). 3 stretches are compositionally biased toward polar residues: residues 713–736 (GRSSNPVQDKNSQSTSKSSETAQR), 783–803 (SGITSSGPTATSTSMNGSASA), and 884–992 (LTGQ…NLGL). Over residues 1112–1126 (SGGGAIGKTSGGNGG) the composition is skewed to gly residues. Residues 1164-1173 (LPQSSGSLPT) are compositionally biased toward polar residues. Low complexity predominate over residues 1174–1195 (SHHQQLLQQQQQQHMQRSQSQQ). Polar residues predominate over residues 1234–1253 (NMTTSPAGTTKFANANSGFP). Over residues 1254-1273 (QNLVQSSSNQVQSQQWKNNS) the composition is skewed to low complexity. Composition is skewed to polar residues over residues 1274–1296 (PRTTNTTQAQSPSMLSPSTSVAA), 1321–1342 (NSKPMTSGSPMQQVQGGTNHQA), and 1351–1360 (SPSTSSVSKN). Over residues 1361 to 1382 (ASGSPRTTASASSAANKGGQAS) the composition is skewed to low complexity. 2 stretches are compositionally biased toward polar residues: residues 1383 to 1397 (TTTHSASQPSKNLQP) and 1405 to 1419 (GGRNNGPSVLGNPTT). A compositionally biased stretch (low complexity) spans 1420–1435 (SSGSKSQQQQQLPKHG).

Interacts with MYC2.

It localises to the nucleus. In terms of biological role, regulator of normal clock function. Acts in the mid to late night. Contributes to the amplitude of circadian clocks. May act on the transcriptional induction of LATE ELONGATED HYPOCOTYL (LHY). Inhibits MYC2 protein accumulation, acting as a negative factor in the JA-signaling pathway. This Arabidopsis thaliana (Mouse-ear cress) protein is Protein TIME FOR COFFEE (TIC).